A 256-amino-acid chain; its full sequence is uncharacterized protein (256 aa).

A signal peptide spans 1 to 24 (MIKRVNKLVLGISLLFLVISIAAG). Cys-25 is lipidated: N-palmitoyl cysteine. A lipid anchor (S-diacylglycerol cysteine) is attached at Cys-25.

Belongs to the staphylococcal tandem lipoprotein family.

It is found in the cell membrane. This is an uncharacterized protein from Staphylococcus aureus.